The chain runs to 177 residues: MIVTGNPVCAIALLLCLVFRASGEYELEMSSGGSNDGRSPSNDFGSCTDGKCTKRTTTTQESGISSGMWFGPRLGKRHKSNEKQQINPEIEMLVNALDQPGMRWTVITIPANEKRQPTQFTPRLGRGSEEKFIYSDATDRNEIDEDDPLFTPRLGRRVPWIPSPRLGRQSRSVSRKI.

The signal sequence occupies residues 1–23 (MIVTGNPVCAIALLLCLVFRASG). Residues 24–54 (EYELEMSSGGSNDGRSPSNDFGSCTDGKCTK) constitute a propeptide that is removed on maturation. Positions 28-73 (EMSSGGSNDGRSPSNDFGSCTDGKCTKRTTTTQESGISSGMWFGPR) are disordered. The segment covering 31–45 (SGGSNDGRSPSNDFG) has biased composition (polar residues). Positions 47 to 59 (CTDGKCTKRTTTT) are enriched in low complexity. A Leucine amide modification is found at leucine 74. The propeptide occupies 78-113 (HKSNEKQQINPEIEMLVNALDQPGMRWTVITIPANE). Leucine amide occurs at positions 124, 154, and 166. A propeptide spanning residues 169 to 177 (QSRSVSRKI) is cleaved from the precursor.

It belongs to the pyrokinin family. As to expression, pyrokinins (PK) 1 to 4 are expressed in the retrocerebral complex. PK 1 is expressed in central brain, anntennal lobes and abominal ganglia. PK 2 is expressed in optical lobes and in gnathal, thoracic and abdominal ganglia. PK 3 is expressed in optical lobes and in thoracic and abdominal ganglia (at protein level).

It is found in the secreted. Functionally, pyrokinins mediate visceral muscle contractile activity (myotropic activity). The sequence is that of PBAN-type neuropeptides from Camponotus floridanus (Florida carpenter ant).